We begin with the raw amino-acid sequence, 1417 residues long: DNA-directed RNA polymerase subunit beta' (1417 aa).

The Zn(2+) site is built by cysteine 68, cysteine 70, cysteine 83, and cysteine 86. Mg(2+)-binding residues include aspartate 458, aspartate 460, and aspartate 462. Zn(2+)-binding residues include cysteine 811, cysteine 884, cysteine 891, and cysteine 894.

The protein belongs to the RNA polymerase beta' chain family. The RNAP catalytic core consists of 2 alpha, 1 beta, 1 beta' and 1 omega subunit. When a sigma factor is associated with the core the holoenzyme is formed, which can initiate transcription. The cofactor is Mg(2+). Requires Zn(2+) as cofactor.

It catalyses the reaction RNA(n) + a ribonucleoside 5'-triphosphate = RNA(n+1) + diphosphate. DNA-dependent RNA polymerase catalyzes the transcription of DNA into RNA using the four ribonucleoside triphosphates as substrates. In Francisella tularensis subsp. mediasiatica (strain FSC147), this protein is DNA-directed RNA polymerase subunit beta'.